The chain runs to 87 residues: MVNMKASMFLTFAGLVLLFVVCYASESEEKEFPKEMLSSIFAVDNDFKQEERDCAGYMRECKEKLCCSGYVCSSRWKWCVLPAPWRR.

Residues 1–24 (MVNMKASMFLTFAGLVLLFVVCYA) form the signal peptide. The propeptide occupies 25–52 (SESEEKEFPKEMLSSIFAVDNDFKQEER). 3 disulfide bridges follow: Cys-54-Cys-67, Cys-61-Cys-72, and Cys-66-Cys-79.

The protein belongs to the neurotoxin 10 (Hwtx-1) family. 51 (Hntx-8) subfamily. Hntx-8 sub-subfamily. In terms of tissue distribution, expressed by the venom gland.

Its subcellular location is the secreted. In terms of biological role, probable sodium channel pore blocker that dose-dependently inhibits voltage-gated sodium channels (VGSC) on DUM neurons in a way similar to tetrodotoxin. Has no effect on the kinetics of activation and inactivation. Seems not to interact with VGSC in an inactivated state. In vivo, reversibly paralyzes cockroaches, and can enhance the muscular contraction elicited by stimulating its nerve. The protein is Mu-theraphotoxin-Hs1a of Cyriopagopus schmidti (Chinese bird spider).